The following is a 486-amino-acid chain: N-succinylglutamate 5-semialdehyde dehydrogenase (486 aa).

Position 220–225 (220–225 (GSSRTG)) interacts with NAD(+). Catalysis depends on residues Glu243 and Cys277.

The protein belongs to the aldehyde dehydrogenase family. AstD subfamily.

The catalysed reaction is N-succinyl-L-glutamate 5-semialdehyde + NAD(+) + H2O = N-succinyl-L-glutamate + NADH + 2 H(+). The protein operates within amino-acid degradation; L-arginine degradation via AST pathway; L-glutamate and succinate from L-arginine: step 4/5. Functionally, catalyzes the NAD-dependent reduction of succinylglutamate semialdehyde into succinylglutamate. This chain is N-succinylglutamate 5-semialdehyde dehydrogenase, found in Shewanella sp. (strain W3-18-1).